The chain runs to 225 residues: DNA repair and recombination protein RadB (225 aa).

Belongs to the eukaryotic RecA-like protein family. RadB subfamily.

Its function is as follows. Involved in DNA repair and in homologous recombination. May regulate the cleavage reactions of the branch-structured DNA. Has a very weak ATPase activity that is not stimulated by DNA. Binds DNA but does not promote DNA strands exchange. The polypeptide is DNA repair and recombination protein RadB (Methanococcoides burtonii (strain DSM 6242 / NBRC 107633 / OCM 468 / ACE-M)).